The following is a 500-amino-acid chain: Protein O-glucosyltransferase 2 (500 aa).

Positions 1–22 (MLRKLLLLLMSCIIFLTRRSKA) are cleaved as a signal peptide. The Filamin repeat unit spans residues 23–128 (AAAASASKTL…LVGKSPYVLR (106 aa)). Asn-60 and Asn-259 each carry an N-linked (GlcNAc...) asparagine glycan. The short motif at 497–500 (RDEL) is the Prevents secretion from ER element.

Belongs to the KDELC family.

It is found in the endoplasmic reticulum lumen. It carries out the reaction L-seryl-[EGF-like domain protein] + UDP-alpha-D-glucose = 3-O-(beta-D-glucosyl)-L-seryl-[EGF-like domain protein] + UDP + H(+). The enzyme catalyses L-seryl-[EGF-like domain protein] + UDP-alpha-D-xylose = 3-O-(beta-D-xylosyl)-L-seryl-[EGF-like domain protein] + UDP + H(+). The protein operates within protein modification; protein glycosylation. Protein glucosyltransferase that catalyzes the transfer of glucose from UDP-glucose to a serine residue within the consensus sequence peptide C-X-N-T-X-G-S-F-X-C. Can also catalyze the transfer of xylose from UDP-xylose but less efficiently. The chain is Protein O-glucosyltransferase 2 (poglut2) from Danio rerio (Zebrafish).